Consider the following 780-residue polypeptide: Chloride channel protein CLC-b (780 aa).

The interval methionine 1–asparagine 28 is disordered. A run of 12 helical transmembrane segments spans residues threonine 87–valine 107, glycine 130–valine 150, phenylalanine 177–leucine 197, leucine 205–arginine 225, glycine 247–leucine 267, alanine 277–isoleucine 297, valine 327–tyrosine 347, valine 370–leucine 390, methionine 452–isoleucine 472, glycine 477–methionine 497, alanine 509–valine 529, and isoleucine 530–isoleucine 550. 2 consecutive CBS domains span residues alanine 594–glutamate 663 and threonine 708–leucine 770. Residues histidine 735–threonine 755 traverse the membrane as a helical segment.

It belongs to the chloride channel (TC 2.A.49) family. Homodimer. Interacts with PP2A5. Broadly expressed in the plant.

It localises to the membrane. Voltage-gated chloride channel. The polypeptide is Chloride channel protein CLC-b (CLC-B) (Arabidopsis thaliana (Mouse-ear cress)).